Here is a 393-residue protein sequence, read N- to C-terminus: Ethanol acetyltransferase 1 (393 aa).

The transit peptide at 1 to 25 directs the protein to the mitochondrion; the sequence is MHFTRTLFNQVASKASRQLPVQKRV. Positions 49–151 constitute an AB hydrolase-1 domain; that stretch reads PIVFVHGIFG…GVIIDNSPIE (103 aa). Catalysis depends on charge relay system residues Ser-122, Asp-146, and His-296. Residues 343 to 354 are compositionally biased toward basic and acidic residues; that stretch reads AKHAQQIEELRK. A disordered region spans residues 343 to 393; the sequence is AKHAQQIEELRKVTSTSESSIPHSTQSSEQAFTENIDLARQEREHQKSVSA. The segment covering 355–375 has biased composition (polar residues); it reads VTSTSESSIPHSTQSSEQAFT. The span at 379–393 shows a compositional bias: basic and acidic residues; sequence DLARQEREHQKSVSA.

It belongs to the AB hydrolase superfamily.

The protein localises to the mitochondrion. It catalyses the reaction ethanol + acetyl-CoA = ethyl acetate + CoA. The catalysed reaction is acetyl-CoA + H2O = acetate + CoA + H(+). It carries out the reaction ethyl acetate + H2O = ethanol + acetate + H(+). In terms of biological role, alcohol acetyltransferase that catalyzes the synthesis of ethyl acetate from ethanol and acetyl-CoA. Can also function as a thioesterase by hydrolyzing acetyl-CoA in the absence of ethanol, as well as esterase hydrolyzing ethyl acetate. The sequence is that of Ethanol acetyltransferase 1 (EAT1) from Wickerhamomyces ciferrii (strain ATCC 14091 / BCRC 22168 / CBS 111 / JCM 3599 / NBRC 0793 / NRRL Y-1031 F-60-10) (Yeast).